Consider the following 203-residue polypeptide: GTP cyclohydrolase-2 (203 aa).

49–53 contacts GTP; that stretch reads RIHSE. Residues Cys-54, Cys-65, and Cys-67 each coordinate Zn(2+). Residues Gln-70, 92–94, and Thr-114 each bind GTP; that span reads EGR. Asp-126 (proton acceptor) is an active-site residue. The active-site Nucleophile is the Arg-128. The GTP site is built by Thr-149 and Lys-154.

The protein belongs to the GTP cyclohydrolase II family. Zn(2+) serves as cofactor.

It catalyses the reaction GTP + 4 H2O = 2,5-diamino-6-hydroxy-4-(5-phosphoribosylamino)-pyrimidine + formate + 2 phosphate + 3 H(+). Its pathway is cofactor biosynthesis; riboflavin biosynthesis; 5-amino-6-(D-ribitylamino)uracil from GTP: step 1/4. In terms of biological role, catalyzes the conversion of GTP to 2,5-diamino-6-ribosylamino-4(3H)-pyrimidinone 5'-phosphate (DARP), formate and pyrophosphate. The sequence is that of GTP cyclohydrolase-2 from Shewanella sp. (strain MR-7).